We begin with the raw amino-acid sequence, 836 residues long: Glutamate receptor ionotropic, kainate 1 (836 aa).

The signal sequence occupies residues Met-1 to Pro-30. The Extracellular portion of the chain corresponds to Gln-31 to Pro-561. 7 N-linked (GlcNAc...) asparagine glycosylation sites follow: Asn-68, Asn-74, Asn-276, Asn-379, Asn-413, Asn-424, and Asn-431. L-glutamate contacts are provided by Pro-516, Thr-518, and Arg-523. An N-linked (GlcNAc...) asparagine glycan is attached at Asn-546. The chain crosses the membrane as a helical span at residues Asp-562–Ala-582. The Cytoplasmic portion of the chain corresponds to Arg-583 to Gly-638. The chain crosses the membrane as a helical span at residues Ile-639–Leu-659. Over Thr-660–Asn-721 the chain is Extracellular. L-glutamate contacts are provided by Ser-689 and Thr-690. A helical transmembrane segment spans residues Ile-722 to Gly-742. Over Glu-743–Ala-836 the chain is Cytoplasmic.

Belongs to the glutamate-gated ion channel (TC 1.A.10.1) family. GRIK1 subfamily. As to quaternary structure, homotetramer or heterotetramer of pore-forming glutamate receptor subunits. Tetramers may be formed by the dimerization of dimers. Can form functional heteromeric receptors with GRIK4 and GRIK5. Interacts with KLHL17. As to expression, most abundant in the cerebellum. Also present in the suprachiasmatic nuclei of the hypothalamus.

Its subcellular location is the cell membrane. It is found in the postsynaptic cell membrane. The enzyme catalyses Ca(2+)(in) = Ca(2+)(out). Ionotropic glutamate receptor that functions as a cation-permeable ligand-gated ion channel, gated by L-glutamate and the glutamatergic agonist kainic acid. L-glutamate acts as an excitatory neurotransmitter at many synapses in the central nervous system. Binding of the excitatory neurotransmitter L-glutamate induces a conformation change, leading to the opening of the cation channel, and thereby converts the chemical signal to an electrical impulse. The receptor then desensitizes rapidly and enters a transient inactive state, characterized by the presence of bound agonist. The protein is Glutamate receptor ionotropic, kainate 1 (Grik1) of Mus musculus (Mouse).